Here is a 1204-residue protein sequence, read N- to C-terminus: Bromodomain and PHD finger-containing protein 3 (1204 aa).

2 disordered regions span residues 1-27 and 76-127; these read MRKPRRKSRQNAEGRRSPSPYSLKCSP and SNKE…TGSQ. Positions 89–99 are enriched in basic residues; that stretch reads KSKKPSSKGKR. A PHD-type 1 zinc finger spans residues 212–262; that stretch reads DAFCCVCLDDECHNSNVILFCDICNLAVHQECYGVPYIPEGQWLCRCCLQS. The segment at 266 to 299 adopts a C2HC pre-PHD-type zinc-finger fold; that stretch reads PVDCVLCPNKGGAFKQTSDGHWAHVVCAIWIPEV. The PHD-type 2 zinc-finger motif lies at 323–387; the sequence is LTCYICKQKG…RKTAYCEAHS (65 aa). The disordered stretch occupies residues 393-464; the sequence is ARRKGDSPRS…KKEPEEAGRE (72 aa). A phosphoserine mark is found at S399 and S402. Over residues 417–429 the composition is skewed to acidic residues; the sequence is GEEEQEEAEEEGQ. Basic residues predominate over residues 442-454; sequence VSKKGKMSLKQKI. N6-acetyllysine occurs at positions 445, 447, and 670. A Bromo domain is found at 588 to 692; the sequence is LELMPFTVLL…DLGGAILRHA (105 aa). Phosphoserine occurs at positions 712 and 739. Residues 778 to 879 form a disordered region; that stretch reads RQKLAQPPPP…FLKSRKVEDE (102 aa). Residues 816–826 are compositionally biased toward acidic residues; it reads QQEEPEEEGDR. Residues S899, S961, and S964 each carry the phosphoserine modification. The segment at 903 to 1015 is disordered; sequence IDRLSLTNPD…ESGSDSECSL (113 aa). Residues 979-990 are compositionally biased toward basic and acidic residues; that stretch reads SCSDSEGERSPQ. Residues 1075-1158 form the PWWP domain; that stretch reads PLELVWAKCR…RDKVLPLGVE (84 aa).

As to quaternary structure, component of some HBO1 complexes composed of KAT7/HBO1, MEAF6, ING4 or ING5, and BRPF3. Component of the MOZ/MORF complex composed at least of ING5, KAT6A, KAT6B, MEAF6 and one of BRPF1, BRD1/BRPF2 and BRPF3. Interacts with KAT7/HBO1; the interaction is direct. As to expression, highly expressed in the adult testis and brain.

The protein localises to the nucleus. Its function is as follows. Scaffold subunit of various histone acetyltransferase (HAT) complexes, such as the MOZ/MORF and HBO1 complexes, which have a histone H3 acetyltransferase activity. Plays a role in DNA replication initiation by directing KAT7/HBO1 specificity towards histone H3 'Lys-14' acetylation (H3K14ac), thereby facilitating the activation of replication origins. Component of the MOZ/MORF complex which has a histone H3 acetyltransferase activity. The chain is Bromodomain and PHD finger-containing protein 3 from Mus musculus (Mouse).